The chain runs to 215 residues: Small ribosomal subunit protein uS7 (215 aa).

Belongs to the universal ribosomal protein uS7 family. In terms of assembly, part of the 30S ribosomal subunit.

In terms of biological role, one of the primary rRNA binding proteins, it binds directly to 16S rRNA where it nucleates assembly of the head domain of the 30S subunit. Is located at the subunit interface close to the decoding center. The sequence is that of Small ribosomal subunit protein uS7 from Thermococcus kodakarensis (strain ATCC BAA-918 / JCM 12380 / KOD1) (Pyrococcus kodakaraensis (strain KOD1)).